Consider the following 302-residue polypeptide: Taste receptor type 2 member 104 (302 aa).

At 1–7 the chain is on the extracellular side; that stretch reads MLSALES. The helical transmembrane segment at 8–28 threads the bilayer; that stretch reads ILLSVATSEAMLGVLGNTFIV. The Cytoplasmic portion of the chain corresponds to 29–43; sequence LVNYTDWVRNKKLSK. The chain crosses the membrane as a helical span at residues 44–64; the sequence is INFILTGLAISRIFTIWIITL. Over 65 to 87 the chain is Extracellular; that stretch reads DAYTKVFLLTMLMPSSLHECMSY. A helical membrane pass occupies residues 88–108; the sequence is IWVIINHLSVWFSTSLGIFYF. Residues 109 to 128 lie on the Cytoplasmic side of the membrane; sequence LKIANFSHYIFLWMKRRADK. Residues 129 to 149 form a helical membrane-spanning segment; it reads VFVFLIVFLIITWLASFPLAV. At 150-182 the chain is on the extracellular side; sequence KVIKDVKIYQSNTSWLIHLEKSELLINYVFANM. N-linked (GlcNAc...) asparagine glycosylation is present at Asn161. The chain crosses the membrane as a helical span at residues 183-203; sequence GPISLFIVAIIACFLLTISLW. Residues 204 to 229 are Cytoplasmic-facing; the sequence is RHSRQMQSIGSGFRDLNTEAHMKAMK. The helical transmembrane segment at 230–250 threads the bilayer; that stretch reads VLIAFIILFILYFLGILIETL. Residues 251–259 are Extracellular-facing; the sequence is CLFLTNNKL. Residues 260 to 280 form a helical membrane-spanning segment; sequence LFIFGFTLSAMYPCCHSFILI. The Cytoplasmic segment spans residues 281-302; sequence LTSRELKQATMRALQRLKCCET.

The protein belongs to the G-protein coupled receptor T2R family.

The protein resides in the membrane. In terms of biological role, putative taste receptor which may play a role in the perception of bitterness. This is Taste receptor type 2 member 104 from Mus musculus (Mouse).